Reading from the N-terminus, the 159-residue chain is Protein-export protein SecB (159 aa).

The protein belongs to the SecB family. As to quaternary structure, homotetramer, a dimer of dimers. One homotetramer interacts with 1 SecA dimer.

It is found in the cytoplasm. Its function is as follows. One of the proteins required for the normal export of preproteins out of the cell cytoplasm. It is a molecular chaperone that binds to a subset of precursor proteins, maintaining them in a translocation-competent state. It also specifically binds to its receptor SecA. This chain is Protein-export protein SecB, found in Pseudomonas fluorescens (strain ATCC BAA-477 / NRRL B-23932 / Pf-5).